We begin with the raw amino-acid sequence, 277 residues long: Thymidylate synthase (277 aa).

Arg-21 is a dUMP binding site. His-51 serves as a coordination point for (6R)-5,10-methylene-5,6,7,8-tetrahydrofolate. 126-127 (RR) is a dUMP binding site. Residue Cys-159 is the Nucleophile of the active site. Residues 179-182 (RSAD), Asn-190, and 220-222 (HLY) contribute to the dUMP site. Residue Asp-182 coordinates (6R)-5,10-methylene-5,6,7,8-tetrahydrofolate. Ser-276 lines the (6R)-5,10-methylene-5,6,7,8-tetrahydrofolate pocket.

The protein belongs to the thymidylate synthase family. Bacterial-type ThyA subfamily. In terms of assembly, homodimer.

It localises to the cytoplasm. The catalysed reaction is dUMP + (6R)-5,10-methylene-5,6,7,8-tetrahydrofolate = 7,8-dihydrofolate + dTMP. It functions in the pathway pyrimidine metabolism; dTTP biosynthesis. In terms of biological role, catalyzes the reductive methylation of 2'-deoxyuridine-5'-monophosphate (dUMP) to 2'-deoxythymidine-5'-monophosphate (dTMP) while utilizing 5,10-methylenetetrahydrofolate (mTHF) as the methyl donor and reductant in the reaction, yielding dihydrofolate (DHF) as a by-product. This enzymatic reaction provides an intracellular de novo source of dTMP, an essential precursor for DNA biosynthesis. The protein is Thymidylate synthase of Hydrogenovibrio crunogenus (strain DSM 25203 / XCL-2) (Thiomicrospira crunogena).